The primary structure comprises 925 residues: MLEDEYQLDFFKNNGFVRKQCQKCGKFFWTRDPERNTCGDAPCDPYSFIGSPVFSREFNISEMREYYLSFFEARGHTRLDRYPVVARWRDDIYLTIASIADFQPFVTSGQVPPPANPLTISQPCIRLNDLDSVGRSGRHLTNFEMMAHHAFNKRGNEIYWKEHTLELCDELLTSLKVDPFAVTYKEEPWAGGGNAGPCVEVIVHGLELATLVFMDLKTDKKGDILIKGETYSKMDNYIVDTGYGLERFVWASKGSPTIYDALFPGIVNELMGLAGLEHELNNTEYSNILAQNARLAGFMDVSEKANLLELRKKVASSIGMTVDKLSVIMEPVEKVYAITDHTRCLTFMLGDGIIPSNVKAGYLARLVLRRTLRMMKDLDIRTPLSEIVDMHIRNMPEYPEFRANFPVIQDILESEEEKFNITMERGRRIIQKSASHFKKTGEKIPLSQLTELYDSHGIPPEMAKEVAADIGVGVEFPDNFYSIIGELHNKAEEKEEEVIPFAERLKHLPKTKRRFYDEPTRLEFEAVVLDVFDNHIVLDNTFFYAEGGGQPADIGTISVGDIVYKVVDVQVYEGVIVHTVDIPDGELEITKGDIITGKVDERRRMTLARHHTATHIVNDAARKVLGKHIWQAGAQKFEDHSRLDLSHYKHISPEELKQIELLANRTVMENKRVITEWMPRIEAEQVYGFGLYQGGVPPGEKIRIVKVGDDVEACGGTHCLSTGVIGPIKILKTERIQDGVERVEFAAGIAAVRAMQKMESLLVDSAKTLSVPPEHLPVSVERFFGEWKDLKKENERLKEDLARSRVYRMLGDASELAGLRVVSEQVPGADSLELQKIATELLKQENVVTLLASDLEGVKLVASVGEKAIECGINAGNLVREMSKIVGGGGGGKPALAMGGGTDPTRIQDALSRGLELVKEACKEA.

4 residues coordinate Zn(2+): H611, H615, C714, and H718.

The protein belongs to the class-II aminoacyl-tRNA synthetase family. Zn(2+) serves as cofactor.

The protein resides in the cytoplasm. The catalysed reaction is tRNA(Ala) + L-alanine + ATP = L-alanyl-tRNA(Ala) + AMP + diphosphate. Its function is as follows. Catalyzes the attachment of alanine to tRNA(Ala) in a two-step reaction: alanine is first activated by ATP to form Ala-AMP and then transferred to the acceptor end of tRNA(Ala). Also edits incorrectly charged Ser-tRNA(Ala) and Gly-tRNA(Ala) via its editing domain. The sequence is that of Alanine--tRNA ligase from Methanosarcina acetivorans (strain ATCC 35395 / DSM 2834 / JCM 12185 / C2A).